A 392-amino-acid polypeptide reads, in one-letter code: Probable tRNA sulfurtransferase (392 aa).

The 107-residue stretch at 63-169 (GRAADAAADT…DAEAFVFLTH (107 aa)) folds into the THUMP domain. Residues 187–188 (LV), Arg270, Gly292, and Gln301 contribute to the ATP site.

This sequence belongs to the ThiI family.

Its subcellular location is the cytoplasm. The catalysed reaction is [ThiI sulfur-carrier protein]-S-sulfanyl-L-cysteine + a uridine in tRNA + 2 reduced [2Fe-2S]-[ferredoxin] + ATP + H(+) = [ThiI sulfur-carrier protein]-L-cysteine + a 4-thiouridine in tRNA + 2 oxidized [2Fe-2S]-[ferredoxin] + AMP + diphosphate. It carries out the reaction [ThiS sulfur-carrier protein]-C-terminal Gly-Gly-AMP + S-sulfanyl-L-cysteinyl-[cysteine desulfurase] + AH2 = [ThiS sulfur-carrier protein]-C-terminal-Gly-aminoethanethioate + L-cysteinyl-[cysteine desulfurase] + A + AMP + 2 H(+). It functions in the pathway cofactor biosynthesis; thiamine diphosphate biosynthesis. Its function is as follows. Catalyzes the ATP-dependent transfer of a sulfur to tRNA to produce 4-thiouridine in position 8 of tRNAs, which functions as a near-UV photosensor. Also catalyzes the transfer of sulfur to the sulfur carrier protein ThiS, forming ThiS-thiocarboxylate. This is a step in the synthesis of thiazole, in the thiamine biosynthesis pathway. The sulfur is donated as persulfide by IscS. The sequence is that of Probable tRNA sulfurtransferase from Halobacterium salinarum (strain ATCC 29341 / DSM 671 / R1).